Here is a 239-residue protein sequence, read N- to C-terminus: Large ribosomal subunit protein uL2 (239 aa).

2 disordered regions span residues Met1 to Pro20 and Phe202 to Arg239.

It belongs to the universal ribosomal protein uL2 family. In terms of assembly, part of the 50S ribosomal subunit. Forms a bridge to the 30S subunit in the 70S ribosome.

Its function is as follows. One of the primary rRNA binding proteins. Required for association of the 30S and 50S subunits to form the 70S ribosome, for tRNA binding and peptide bond formation. It has been suggested to have peptidyltransferase activity; this is somewhat controversial. Makes several contacts with the 16S rRNA in the 70S ribosome. This is Large ribosomal subunit protein uL2 from Methanosphaerula palustris (strain ATCC BAA-1556 / DSM 19958 / E1-9c).